The following is a 141-amino-acid chain: Endoribonuclease YbeY (141 aa).

Zn(2+)-binding residues include histidine 105, histidine 109, and aspartate 115.

This sequence belongs to the endoribonuclease YbeY family. Zn(2+) is required as a cofactor.

The protein resides in the cytoplasm. Single strand-specific metallo-endoribonuclease involved in late-stage 70S ribosome quality control and in maturation of the 3' terminus of the 16S rRNA. The sequence is that of Endoribonuclease YbeY from Chloroherpeton thalassium (strain ATCC 35110 / GB-78).